The primary structure comprises 287 residues: Undecaprenyl-diphosphatase (287 aa).

8 consecutive transmembrane segments (helical) span residues methionine 1 to valine 21, methionine 49 to alanine 69, leucine 101 to alanine 121, valine 126 to tryptophan 146, threonine 160 to leucine 180, tyrosine 203 to valine 223, valine 232 to leucine 252, and phenylalanine 267 to isoleucine 287.

This sequence belongs to the UppP family.

The protein localises to the cell inner membrane. It carries out the reaction di-trans,octa-cis-undecaprenyl diphosphate + H2O = di-trans,octa-cis-undecaprenyl phosphate + phosphate + H(+). In terms of biological role, catalyzes the dephosphorylation of undecaprenyl diphosphate (UPP). Confers resistance to bacitracin. In Halorhodospira halophila (strain DSM 244 / SL1) (Ectothiorhodospira halophila (strain DSM 244 / SL1)), this protein is Undecaprenyl-diphosphatase.